The following is a 171-amino-acid chain: ATP synthase subunit b (171 aa).

The chain crosses the membrane as a helical span at residues 4–24; sequence IAFFVICVGFPSLIFASASIQ.

It belongs to the ATPase B chain family. As to quaternary structure, F-type ATPases have 2 components, F(1) - the catalytic core - and F(0) - the membrane proton channel. F(1) has five subunits: alpha(3), beta(3), gamma(1), delta(1), epsilon(1). F(0) has three main subunits: a(1), b(2) and c(10-14). The alpha and beta chains form an alternating ring which encloses part of the gamma chain. F(1) is attached to F(0) by a central stalk formed by the gamma and epsilon chains, while a peripheral stalk is formed by the delta and b chains.

The protein localises to the cell inner membrane. In terms of biological role, f(1)F(0) ATP synthase produces ATP from ADP in the presence of a proton or sodium gradient. F-type ATPases consist of two structural domains, F(1) containing the extramembraneous catalytic core and F(0) containing the membrane proton channel, linked together by a central stalk and a peripheral stalk. During catalysis, ATP synthesis in the catalytic domain of F(1) is coupled via a rotary mechanism of the central stalk subunits to proton translocation. Its function is as follows. Component of the F(0) channel, it forms part of the peripheral stalk, linking F(1) to F(0). The protein is ATP synthase subunit b of Helicobacter hepaticus (strain ATCC 51449 / 3B1).